A 408-amino-acid polypeptide reads, in one-letter code: Dihydrolipoyllysine-residue acetyltransferase component of pyruvate dehydrogenase complex (408 aa).

The 77-residue stretch at 2–78 (PIKILMPALS…PVNSLIAVLS (77 aa)) folds into the Lipoyl-binding domain. Lys43 carries the post-translational modification N6-lipoyllysine. The Peripheral subunit-binding (PSBD) domain maps to 128-165 (FASPLAKRLAKIGDIRLENVQGSGPHGRIVKQDILSYD). The active site involves His381.

The protein belongs to the 2-oxoacid dehydrogenase family. Forms a 24-polypeptide structural core with octahedral symmetry. (R)-lipoate serves as cofactor.

The catalysed reaction is N(6)-[(R)-dihydrolipoyl]-L-lysyl-[protein] + acetyl-CoA = N(6)-[(R)-S(8)-acetyldihydrolipoyl]-L-lysyl-[protein] + CoA. In terms of biological role, the pyruvate dehydrogenase complex catalyzes the overall conversion of pyruvate to acetyl-CoA and CO(2). It contains multiple copies of three enzymatic components: pyruvate dehydrogenase (E1), dihydrolipoamide acetyltransferase (E2) and lipoamide dehydrogenase (E3). This is Dihydrolipoyllysine-residue acetyltransferase component of pyruvate dehydrogenase complex (pdhC) from Rickettsia prowazekii (strain Madrid E).